The chain runs to 445 residues: MQFDESDARVWIWFEIRREDDIVELLWQSGQVVGTNQTHRQSYDPPPILRGSGSGRGEENAPLSQPPPHLHQQNLFIQEGEMYSWLHHSYRQNYFCSELLNSTPATHPQSSISLAPRQTIATRRAENFMNFSWLRGNIFTGGRVDEAGPSFSVVRESMQVGSNTTPPSSSATESCVIPATEGTASRVSGTLAAHDLGRKGKAVAVEAAGTPSSGVCKAETEPVQIQPATESKLKAREETHGTEEARGSTSRKRSRTAEMHNLAERRRREKINEKMKTLQQLIPRCNKSTKVSTLDDAIEYVKSLQSQIQGMMSPMMNAGNTQQFMPHMAMDMNRPPPFIPFPGTSFPMPAQMAGVGPSYPAPRYPFPNIQTFDPSRVRLPSPQPNPVSNQPQFPAYMNPYSQFAGPHQLQQPPPPPFQGQTTSQLSSGQASSSKEPEDQENQPTA.

Disordered stretches follow at residues 36–70, 224–260, and 365–445; these read NQTHRQSYDPPPILRGSGSGRGEENAPLSQPPPHL, QIQPATESKLKAREETHGTEEARGSTSRKRSRTAEMH, and PFPN…QPTA. The segment covering 231-246 has biased composition (basic and acidic residues); sequence SKLKAREETHGTEEAR. One can recognise a bHLH domain in the interval 255 to 304; sequence RTAEMHNLAERRRREKINEKMKTLQQLIPRCNKSTKVSTLDDAIEYVKSL. Residues 418–433 are compositionally biased toward low complexity; sequence QGQTTSQLSSGQASSS.

As to quaternary structure, homodimer.

The protein resides in the nucleus. This Arabidopsis thaliana (Mouse-ear cress) protein is Putative transcription factor bHLH056 (BHLH56).